The chain runs to 734 residues: Photosystem I P700 chlorophyll a apoprotein A2 (734 aa).

8 helical membrane-spanning segments follow: residues 46 to 69 (IFAS…FHVA), 135 to 158 (LYTG…LHLQ), 175 to 199 (LNHH…HVAI), 273 to 291 (IAHH…GHMY), 330 to 353 (LHFQ…QHMY), 369 to 395 (AALY…IFFI), 417 to 439 (AIIS…LYIH), and 517 to 535 (FLVH…LILV). Residues C559 and C568 each coordinate [4Fe-4S] cluster. Transmembrane regions (helical) follow at residues 575 to 596 (AFYL…YWHW) and 643 to 665 (LSVW…MFLI). Residues H654, M662, and Y670 each contribute to the chlorophyll a site. W671 lines the phylloquinone pocket. The chain crosses the membrane as a helical span at residues 707 to 727 (FVGLAHFSVGYIFTYAAFLIA).

Belongs to the PsaA/PsaB family. In terms of assembly, the PsaA/B heterodimer binds the P700 chlorophyll special pair and subsequent electron acceptors. PSI consists of a core antenna complex that captures photons, and an electron transfer chain that converts photonic excitation into a charge separation. The eukaryotic PSI reaction center is composed of at least 11 subunits. P700 is a chlorophyll a/chlorophyll a' dimer, A0 is one or more chlorophyll a, A1 is one or both phylloquinones and FX is a shared 4Fe-4S iron-sulfur center. serves as cofactor.

Its subcellular location is the plastid membrane. It catalyses the reaction reduced [plastocyanin] + hnu + oxidized [2Fe-2S]-[ferredoxin] = oxidized [plastocyanin] + reduced [2Fe-2S]-[ferredoxin]. Functionally, psaA and PsaB bind P700, the primary electron donor of photosystem I (PSI), as well as the electron acceptors A0, A1 and FX. PSI is a plastocyanin-ferredoxin oxidoreductase, converting photonic excitation into a charge separation, which transfers an electron from the donor P700 chlorophyll pair to the spectroscopically characterized acceptors A0, A1, FX, FA and FB in turn. Oxidized P700 is reduced on the lumenal side of the thylakoid membrane by plastocyanin. In Cuscuta sandwichiana (Kauna'oa), this protein is Photosystem I P700 chlorophyll a apoprotein A2.